Consider the following 175-residue polypeptide: Bifunctional protein PyrR (175 aa).

Residues 40-41, 102-110, arginine 135, and valine 159 each bind substrate; these read TR and DDVLYTGRT. The PRPP-binding signature appears at 98–110; sequence VIIIDDVLYTGRT.

Belongs to the purine/pyrimidine phosphoribosyltransferase family. PyrR subfamily. As to quaternary structure, homodimer and homohexamer; in equilibrium.

It catalyses the reaction UMP + diphosphate = 5-phospho-alpha-D-ribose 1-diphosphate + uracil. In terms of biological role, regulates transcriptional attenuation of the pyrimidine nucleotide (pyr) operon by binding in a uridine-dependent manner to specific sites on pyr mRNA. This disrupts an antiterminator hairpin in the RNA and favors formation of a downstream transcription terminator, leading to a reduced expression of downstream genes. Its function is as follows. Also displays a weak uracil phosphoribosyltransferase activity which is not physiologically significant. This is Bifunctional protein PyrR from Staphylococcus aureus (strain MSSA476).